A 423-amino-acid chain; its full sequence is UDP-N-acetylgalactosamine-undecaprenyl-phosphate N-acetylgalactosaminephosphotransferase (423 aa).

Residues Met1–Arg13 are Extracellular-facing. The helical transmembrane segment at Val14 to Ala34 threads the bilayer. The Cytoplasmic segment spans residues Leu35 to Asp47. Residues Ala48–Leu68 traverse the membrane as a helical segment. At Tyr69–Pro79 the chain is on the extracellular side. A helical membrane pass occupies residues Val80–Phe100. The Cytoplasmic portion of the chain corresponds to Leu101–Arg107. A helical transmembrane segment spans residues Gln108–Gly128. Topologically, residues Arg129–Asp239 are extracellular. Residues Ile240 to Leu260 traverse the membrane as a helical segment. The Cytoplasmic portion of the chain corresponds to Ile261 to Arg423.

This sequence belongs to the bacterial sugar transferase family.

The protein resides in the membrane. It carries out the reaction di-trans,octa-cis-undecaprenyl phosphate + UDP-N-acetyl-alpha-D-galactosamine = N-acetyl-alpha-D-galactosaminyl-di-trans,octa-cis-undecaprenyl diphosphate + UMP. It participates in bacterial outer membrane biogenesis; LPS O-antigen biosynthesis. Its function is as follows. Transfers N-acetyl-galactosamine (GalNAc) to undecaprenyl phosphate, a step in the assembly of the repeating-unit of the O-antigen. Shows no activity with UDP-N-acetyl-alpha-D-glucosamine. The chain is UDP-N-acetylgalactosamine-undecaprenyl-phosphate N-acetylgalactosaminephosphotransferase (wecA) from Aeromonas hydrophila.